The primary structure comprises 343 residues: E3 ubiquitin-protein ligase SP1 (343 aa).

A helical membrane pass occupies residues 1-21; it reads MIPWGGVTCCLSAAALYLLGR. The Chloroplast intermembrane portion of the chain corresponds to 22–222; that stretch reads SSGRDAEVLE…LISNLGKWSR (201 aa). The helical transmembrane segment at 223–244 threads the bilayer; it reads LYKYASMGFTVLGVFLITKHVI. At 245 to 343 the chain is on the cytoplasmic side; the sequence is DSVLERRRRR…IDLAVKTYRH (99 aa). Residues 296–331 form an RING-type zinc finger; sequence CVICLEQEYNAVFVPCGHMCCCTACSSHLTSCPLCR.

In terms of assembly, interacts with TOC33, TOC75-3 and TOC159. Post-translationally, auto-ubiquitinated.

The protein resides in the plastid. It is found in the chloroplast outer membrane. It carries out the reaction S-ubiquitinyl-[E2 ubiquitin-conjugating enzyme]-L-cysteine + [acceptor protein]-L-lysine = [E2 ubiquitin-conjugating enzyme]-L-cysteine + N(6)-ubiquitinyl-[acceptor protein]-L-lysine.. Its pathway is protein modification; protein ubiquitination. Functionally, E3 ubiquitin-protein ligase involved in the regulation of protein import in the chloroplast. Associates with TOC complexes and mediates ubiquitination of TOC components, promoting their degradation via the ubiquitin-proteasome system (UPS). Plays a role in the reorganization of the TOC machinery. Involved in a mechanism that regulates plastid biogenesis via UPS. Promotes stress tolerance by depleting the chloroplast protein import apparatus, which limits photosystem assembly and the potential for reactive oxygen species (ROS) formation. May act as negative regulator of programmed cell death (PCD) during biotic stress. This Arabidopsis thaliana (Mouse-ear cress) protein is E3 ubiquitin-protein ligase SP1.